The following is a 142-amino-acid chain: Large ribosomal subunit protein mL42 (142 aa).

The transit peptide at 1-31 (MAAAVKWAISNRTIWKHLLPIQNGALSSACH) directs the protein to the mitochondrion.

This sequence belongs to the mitochondrion-specific ribosomal protein mL42 family. Component of the mitochondrial ribosome large subunit (39S) which comprises a 16S rRNA and about 50 distinct proteins. Component of the mitochondrial ribosome small subunit (28S) which comprises a 12S rRNA and about 30 distinct proteins.

The protein resides in the mitochondrion. The polypeptide is Large ribosomal subunit protein mL42 (Mrpl42) (Mus musculus (Mouse)).